The following is a 733-amino-acid chain: Ribosomal protein S6 kinase alpha-2 (733 aa).

Residues 59 to 318 enclose the Protein kinase 1 domain; it reads FELLKVLGQG…VEEIKRHPFF (260 aa). Residues 65-73 and K91 contribute to the ATP site; that span reads LGQGSYGKV. The active-site Proton acceptor is D184. Phosphoserine; by PDPK1 is present on S218. In terms of domain architecture, AGC-kinase C-terminal spans 319–388; sequence VTIDWNTLYR…VASSLIQEPS (70 aa). S377 bears the Phosphoserine mark. One can recognise a Protein kinase 2 domain in the interval 415 to 672; the sequence is YEIKEDIGVG…AMQVLKHPWV (258 aa). ATP-binding positions include 421–429 and K444; that span reads IGVGSYSVC. D532 (proton acceptor) is an active-site residue.

It belongs to the protein kinase superfamily. AGC Ser/Thr protein kinase family. S6 kinase subfamily. Forms a complex with either MAPK1/ERK2 or MAPK3/ERK1 in quiescent cells. Transiently dissociates following mitogenic stimulation. Interacts with FBXO5; cooperate to induce the metaphase arrest of early blastomeres; increases and stabilizes interaction of FBXO5 with CDC20. Requires Mg(2+) as cofactor. In terms of processing, activated by phosphorylation at Ser-218 by PDPK1. Autophosphorylated on Ser-377, as part of the activation process. May be phosphorylated at Thr-356 and Ser-360 by MAPK1/ERK2 and MAPK3/ERK1. Post-translationally, N-terminal myristoylation results in an activated kinase in the absence of added growth factors. Widely expressed with higher expression in lung, skeletal muscle, brain, uterus, ovary, thyroid and prostate.

It localises to the nucleus. The protein resides in the cytoplasm. The catalysed reaction is L-seryl-[protein] + ATP = O-phospho-L-seryl-[protein] + ADP + H(+). It carries out the reaction L-threonyl-[protein] + ATP = O-phospho-L-threonyl-[protein] + ADP + H(+). Its activity is regulated as follows. Upon extracellular signal or mitogen stimulation, phosphorylated at Thr-570 in the C-terminal kinase domain (CTKD) by MAPK1/ERK2 and MAPK3/ERK1. The activated CTKD then autophosphorylates Ser-377, allowing binding of PDPK1, which in turn phosphorylates Ser-218 in the N-terminal kinase domain (NTDK) leading to the full activation of the protein and subsequent phosphorylation of the substrates by the NTKD. Its function is as follows. Serine/threonine-protein kinase that acts downstream of ERK (MAPK1/ERK2 and MAPK3/ERK1) signaling and mediates mitogenic and stress-induced activation of transcription factors, regulates translation, and mediates cellular proliferation, survival, and differentiation. May function as tumor suppressor in epithelial ovarian cancer cells. This Homo sapiens (Human) protein is Ribosomal protein S6 kinase alpha-2 (RPS6KA2).